A 470-amino-acid polypeptide reads, in one-letter code: Uronate isomerase (470 aa).

The protein belongs to the metallo-dependent hydrolases superfamily. Uronate isomerase family.

The catalysed reaction is D-glucuronate = D-fructuronate. It catalyses the reaction aldehydo-D-galacturonate = keto-D-tagaturonate. It participates in carbohydrate metabolism; pentose and glucuronate interconversion. This Shigella boydii serotype 4 (strain Sb227) protein is Uronate isomerase.